The chain runs to 689 residues: Solute carrier family 22 member 23 (689 aa).

2 disordered regions span residues 1–55 (MAID…PLPA) and 162–188 (TASW…GKGN). The N-linked (GlcNAc...) asparagine glycan is linked to Asn24. Residues 165-177 (WGTTSNRSNSSDT) show a composition bias toward polar residues. The next 2 membrane-spanning stretches (helical) occupy residues 229 to 249 (FSLL…ADWV) and 253 to 273 (PVLL…ALSV). Asn274 carries an N-linked (GlcNAc...) asparagine glycan. 8 helical membrane passes run 283 to 303 (FFEG…RIEL), 310 to 330 (FIIT…MPGL), 339 to 359 (VLQA…SIFP), 466 to 486 (TMAS…KFLG), 489 to 509 (GGLL…LGLL), 541 to 561 (IAFS…SVFF), 572 to 592 (CGGL…APII), and 601 to 621 (FLHH…ILLL).

Belongs to the major facilitator (TC 2.A.1) superfamily. Organic cation transporter (TC 2.A.1.19) family.

It is found in the membrane. In Mus musculus (Mouse), this protein is Solute carrier family 22 member 23 (Slc22a23).